Here is a 152-residue protein sequence, read N- to C-terminus: Siroheme decarboxylase beta subunit (152 aa).

The protein belongs to the Ahb/Nir family. Forms a heterodimer composed of AhbA and AhbB.

The catalysed reaction is siroheme + 2 H(+) = 12,18-didecarboxysiroheme + 2 CO2. It functions in the pathway porphyrin-containing compound metabolism; protoheme biosynthesis. Its activity is regulated as follows. Binds heme b. The redox state of the heme b modulates the activity of the enzyme. Activity is stimulated by sodium dithionite. In terms of biological role, involved in siroheme-dependent heme b biosynthesis. Catalyzes the decarboxylation of siroheme into didecarboxysiroheme. This chain is Siroheme decarboxylase beta subunit, found in Methanosarcina barkeri (strain Fusaro / DSM 804).